The sequence spans 147 residues: Prefoldin subunit alpha (147 aa).

It belongs to the prefoldin subunit alpha family. Heterohexamer of two alpha and four beta subunits.

It localises to the cytoplasm. Functionally, molecular chaperone capable of stabilizing a range of proteins. Seems to fulfill an ATP-independent, HSP70-like function in archaeal de novo protein folding. The chain is Prefoldin subunit alpha (pfdA) from Saccharolobus solfataricus (strain ATCC 35092 / DSM 1617 / JCM 11322 / P2) (Sulfolobus solfataricus).